A 644-amino-acid polypeptide reads, in one-letter code: Transmembrane 9 superfamily member 9 (644 aa).

The first 27 residues, 1–27 (MEFYRSSRRLQILGSVILLLSIHVAHS), serve as a signal peptide directing secretion. The Lumenal portion of the chain corresponds to 28–281 (FYLPGVAPQD…YLLMSDNQIH (254 aa)). Residues 282–302 (WFSIVNSLMIVLFLSGMVAMI) traverse the membrane as a helical segment. At 303–351 (MLRTLYRDISRYNELETQEEAQEETGWKLVHGDVFRPPANSDLLCVYVG) the chain is on the cytoplasmic side. The helical transmembrane segment at 352–372 (TGVQCLGMVLVTMIFAMLGFL) threads the bilayer. Over 373 to 377 (SPSNR) the chain is Lumenal. Residues 378-398 (GGLMTAMLLLWVFMGLFAGYA) form a helical membrane-spanning segment. The Cytoplasmic segment spans residues 399 to 418 (SSRLYKMFKGTEWKRIAFRT). Residues 419-439 (AFLFPAVVSAIFFVLNALIWG) traverse the membrane as a helical segment. Residues 440–451 (QKSSGAVPFGTM) are Lumenal-facing. The helical transmembrane segment at 452 to 472 (FALIFLWFGISVPLVFVGAYL) threads the bilayer. Over 473-501 (GFKKPPLDDPVKTNKIPRQIPEQAWYMNP) the chain is Cytoplasmic. A helical membrane pass occupies residues 502-522 (IFSILIGGILPFGAVFIELFF). Residues 523 to 534 (ILTSIWLNQFYY) lie on the Lumenal side of the membrane. A helical membrane pass occupies residues 535–555 (IFGFLFLVFVILMVTCAEITI). Residues 556–573 (VLCYFQLCSEDYLWWWRS) lie on the Cytoplasmic side of the membrane. The chain crosses the membrane as a helical span at residues 574–594 (YLTSGSSAVYLFLYAAFYFFT). The Lumenal segment spans residues 595 to 600 (KLQITK). The chain crosses the membrane as a helical span at residues 601–621 (LVSAMLYFGYMLIASYAFFVL). The Cytoplasmic portion of the chain corresponds to 622 to 644 (TGTIGFYACLWFTRLIYSSVKID). The Endoplasmic reticulum export signal motif lies at 633-638 (FTRLIY). Residues 642 to 644 (KID) carry the Golgi retention signal motif.

This sequence belongs to the nonaspanin (TM9SF) (TC 9.A.2) family.

Its subcellular location is the endosome membrane. It is found in the golgi apparatus membrane. The protein is Transmembrane 9 superfamily member 9 of Arabidopsis thaliana (Mouse-ear cress).